Reading from the N-terminus, the 294-residue chain is MASLKDLRMKIVSVKSTRKITSAMKMVAASKLRRAQTAAEAARPFAERMERMLGTLAASLAGQSGAPRMISGTGFDKVHLLVAVTADRGLCGGFNSSIVRATKAMAADLLKQGKTIKIMPVGRKAREQLRRDYGQYMIEGFENLGRKGIVFAEADQVASQISAMFDAEEFDVCTVVYNKFKSAIAQEVTRQQVIPFPVPEQAAKSETGPKAIYEFEPSEEEILAEILPRNLATQMFRALLESQASEQGARMTAMDNATRNAGDMINALAIKYNRSRQAQITKELIEIISGAEAL.

It belongs to the ATPase gamma chain family. In terms of assembly, F-type ATPases have 2 components, CF(1) - the catalytic core - and CF(0) - the membrane proton channel. CF(1) has five subunits: alpha(3), beta(3), gamma(1), delta(1), epsilon(1). CF(0) has three main subunits: a, b and c.

It is found in the cell inner membrane. Produces ATP from ADP in the presence of a proton gradient across the membrane. The gamma chain is believed to be important in regulating ATPase activity and the flow of protons through the CF(0) complex. This is ATP synthase gamma chain from Paramagnetospirillum magneticum (strain ATCC 700264 / AMB-1) (Magnetospirillum magneticum).